A 138-amino-acid polypeptide reads, in one-letter code: Large ribosomal subunit protein uL16 (138 aa).

The segment covering Met-1 to Gly-19 has biased composition (basic residues). The interval Met-1 to Gly-24 is disordered.

This sequence belongs to the universal ribosomal protein uL16 family. In terms of assembly, part of the 50S ribosomal subunit.

In terms of biological role, binds 23S rRNA and is also seen to make contacts with the A and possibly P site tRNAs. This Corynebacterium diphtheriae (strain ATCC 700971 / NCTC 13129 / Biotype gravis) protein is Large ribosomal subunit protein uL16.